The chain runs to 167 residues: Alanine- and arginine-rich domain-containing protein (167 aa).

Residues 140-167 (LKKRQDQELASKPQSPQDKEMNSECGSA) form a disordered region.

In terms of tissue distribution, preferentially expressed in testis both in embryo and adult. Expressed at much lower level in other tissues.

The polypeptide is Alanine- and arginine-rich domain-containing protein (Aard) (Mus musculus (Mouse)).